Here is a 339-residue protein sequence, read N- to C-terminus: Phenylalanine--tRNA ligase alpha subunit (339 aa).

Mg(2+) is bound at residue glutamate 250.

This sequence belongs to the class-II aminoacyl-tRNA synthetase family. Phe-tRNA synthetase alpha subunit type 1 subfamily. As to quaternary structure, tetramer of two alpha and two beta subunits. The cofactor is Mg(2+).

Its subcellular location is the cytoplasm. It catalyses the reaction tRNA(Phe) + L-phenylalanine + ATP = L-phenylalanyl-tRNA(Phe) + AMP + diphosphate + H(+). The polypeptide is Phenylalanine--tRNA ligase alpha subunit (Parabacteroides distasonis (strain ATCC 8503 / DSM 20701 / CIP 104284 / JCM 5825 / NCTC 11152)).